The sequence spans 378 residues: Forkhead box protein I1 (378 aa).

Disordered regions lie at residues 1–26 (MSSF…QEPP) and 208–278 (DNGN…APCL). Residues 123–217 (RPPYSYSALI…DNGNFRRKRK (95 aa)) constitute a DNA-binding region (fork-head). The segment covering 236-248 (SSLPVDSPKTTEP) has biased composition (polar residues).

Expressed in kidney.

The protein resides in the nucleus. Functionally, transcriptional activator required for the development of normal hearing, sense of balance and kidney function. Required for the expression of SLC26A4/PDS, JAG1 and COCH in a subset of epithelial cells and the development of the endolymphatic system in the inner ear. Also required for the expression of SLC4A1/AE1, SLC4A9/AE4, ATP6V1B1 and the differentiation of intercalated cells in the epithelium of distal renal tubules. This Homo sapiens (Human) protein is Forkhead box protein I1 (FOXI1).